The chain runs to 74 residues: Exodeoxyribonuclease 7 small subunit (74 aa).

Belongs to the XseB family. Heterooligomer composed of large and small subunits.

The protein localises to the cytoplasm. The catalysed reaction is Exonucleolytic cleavage in either 5'- to 3'- or 3'- to 5'-direction to yield nucleoside 5'-phosphates.. Bidirectionally degrades single-stranded DNA into large acid-insoluble oligonucleotides, which are then degraded further into small acid-soluble oligonucleotides. This Glaesserella parasuis serovar 5 (strain SH0165) (Haemophilus parasuis) protein is Exodeoxyribonuclease 7 small subunit.